A 196-amino-acid chain; its full sequence is FMN-dependent NADH:quinone oxidoreductase (196 aa).

Residues Ser-10 and 17-19 contribute to the FMN site; that span reads SYS.

It belongs to the azoreductase type 1 family. As to quaternary structure, homodimer. It depends on FMN as a cofactor.

The catalysed reaction is 2 a quinone + NADH + H(+) = 2 a 1,4-benzosemiquinone + NAD(+). It catalyses the reaction N,N-dimethyl-1,4-phenylenediamine + anthranilate + 2 NAD(+) = 2-(4-dimethylaminophenyl)diazenylbenzoate + 2 NADH + 2 H(+). Quinone reductase that provides resistance to thiol-specific stress caused by electrophilic quinones. Functionally, also exhibits azoreductase activity. Catalyzes the reductive cleavage of the azo bond in aromatic azo compounds to the corresponding amines. This is FMN-dependent NADH:quinone oxidoreductase from Metamycoplasma arthritidis (strain 158L3-1) (Mycoplasma arthritidis).